The chain runs to 98 residues: U10-barytoxin-Tl1a (98 aa).

The signal sequence occupies residues 1 to 21; sequence MKTLVLVAVLGVASLYLLSSA. Residues 22–50 constitute a propeptide that is removed on maturation; the sequence is SEVQQLSPAEEEFRAFVSTFGGLFETEER. 3 disulfide bridges follow: Cys57-Cys71, Cys64-Cys76, and Cys70-Cys89.

This sequence belongs to the neurotoxin 10 (Hwtx-1) family. 27 (ICK-3) subfamily. In terms of tissue distribution, expressed by the venom gland.

The protein localises to the secreted. In terms of biological role, ion channel inhibitor. This Trittame loki (Brush-footed trapdoor spider) protein is U10-barytoxin-Tl1a.